The primary structure comprises 116 residues: uncharacterized protein (116 aa).

This is an uncharacterized protein from Aquifex aeolicus (strain VF5).